A 129-amino-acid polypeptide reads, in one-letter code: Small ribosomal subunit protein uS11 (129 aa).

The protein belongs to the universal ribosomal protein uS11 family. As to quaternary structure, part of the 30S ribosomal subunit.

Located on the platform of the 30S subunit. The chain is Small ribosomal subunit protein uS11 from Haloarcula marismortui (strain ATCC 43049 / DSM 3752 / JCM 8966 / VKM B-1809) (Halobacterium marismortui).